Here is a 310-residue protein sequence, read N- to C-terminus: Junctional adhesion molecule C (310 aa).

The first 31 residues, 1-31 (MALSRRLRLRLCARLPDFFLLLLFRGCVIEA), serve as a signal peptide directing secretion. At 32–241 (VNLKSSNRNP…GQDMEVYDLN (210 aa)) the chain is on the extracellular side. The region spanning 35-127 (KSSNRNPVVH…VALNDRKEVD (93 aa)) is the Ig-like V-type domain. 2 cysteine pairs are disulfide-bonded: Cys53-Cys115 and Cys160-Cys219. N-linked (GlcNAc...) asparagine glycosylation is found at Asn104 and Asn192. Residues 139-236 (PVAPVCRVPK…AARCEGQDME (98 aa)) form the Ig-like C2-type domain. The helical transmembrane segment at 242-262 (IAGIIGGVLVVLIVLAVITMG) threads the bilayer. The Cytoplasmic portion of the chain corresponds to 263 to 310 (ICCAYRRGCFISSKQDGESYKSPGKHEGVNYIRTSEEGDFRHKSSFVI). Residues Cys264 and Cys265 are each lipidated (S-palmitoyl cysteine).

It belongs to the immunoglobulin superfamily. As to quaternary structure, interacts with ITGAM. Interacts with GORASP2. In terms of processing, proteolytically cleaved from endothelial cells surface into a soluble form by ADAM10 and ADAM17; the release of soluble JAM3 is increased by pro-inflammatory factors. S-palmitoylated by ZDHHC7. S-palmitoylation promotes expression at tight junctions.

Its subcellular location is the cell membrane. It localises to the cell junction. It is found in the desmosome. The protein localises to the tight junction. The protein resides in the secreted. Junctional adhesion protein that mediates heterotypic cell-cell interactions with its cognate receptor JAM2 to regulate different cellular processes. Plays a role in homing and mobilization of hematopoietic stem and progenitor cells within the bone marrow. At the surface of bone marrow stromal cells, it contributes to the retention of the hematopoietic stem and progenitor cells expressing JAM3. Plays a central role in leukocytes extravasation by facilitating transmigration through the endothelium. Plays a role in spermatogenesis where JAM2 and JAM3, which are respectively expressed by Sertoli and germ cells, mediate an interaction between both cell types and play an essential role in the anchorage of germ cells onto Sertoli cells and the assembly of cell polarity complexes during spermatid differentiation. Also functions as a counter-receptor for ITGAM, mediating leukocyte-platelet interactions and is involved in the regulation of transepithelial migration of polymorphonuclear neutrophils (PMN). Plays a role in angiogenesis. Plays a role in the regulation of cell migration. During myogenesis, it is involved in myocyte fusion. Functionally, promotes chemotaxis of vascular endothelial cells and stimulates angiogenesis. This Rattus norvegicus (Rat) protein is Junctional adhesion molecule C (Jam3).